The chain runs to 200 residues: Holliday junction resolvase RecU (200 aa).

The disordered stretch occupies residues 1–25 (MTIRYPNGKRYNQASQPQKTPIKTH). The segment covering 10 to 25 (RYNQASQPQKTPIKTH) has biased composition (polar residues). Positions 85, 87, 100, and 119 each coordinate Mg(2+).

It belongs to the RecU family. It depends on Mg(2+) as a cofactor.

The protein resides in the cytoplasm. The enzyme catalyses Endonucleolytic cleavage at a junction such as a reciprocal single-stranded crossover between two homologous DNA duplexes (Holliday junction).. In terms of biological role, endonuclease that resolves Holliday junction intermediates in genetic recombination. Cleaves mobile four-strand junctions by introducing symmetrical nicks in paired strands. Promotes annealing of linear ssDNA with homologous dsDNA. Required for DNA repair, homologous recombination and chromosome segregation. This Bacillus cereus (strain G9842) protein is Holliday junction resolvase RecU.